The primary structure comprises 469 residues: DNA polymerase delta subunit 2 (469 aa).

The residue at position 1 (M1) is an N-acetylmethionine. S257 bears the Phosphoserine mark.

This sequence belongs to the DNA polymerase delta/II small subunit family. As to quaternary structure, component of both the DNA polymerase delta and DNA polymerase zeta complexes. Component of the tetrameric DNA polymerase delta complex (Pol-delta4), which consists of POLD1/p125, POLD2/p50, POLD3/p66/p68 and POLD4/p12, with POLD1 bearing DNA polymerase and 3' to 5' proofreading exonuclease activities. Within Pol-delta4, directly interacts with POLD1, POLD3 and POLD4. Following stress caused by DNA damaging agents or by replication stress, POLD4 is degraded and Pol-delta4 is converted into a trimeric form of the complex (Pol-delta3), which consists of POLD1, POLD2 and POLD3. Pol-delta3 is the major form occurring at S phase replication sites, as well as DNA damage sites. Also observed as a dimeric complex with POLD2 (Pol-delta2 complex). Pol-delta2 is relatively insensitive to the PCNA stimulation (2-5-fold) compared to Pol-delta4 that is stimulated by over 50-fold. Contrary to the other components of Pol-delta4, does not directly interact with PCNA. As POLD1 and POLD4, directly interacts with WRNIP1; this interaction stimulates DNA polymerase delta-mediated DNA synthesis, independently of the presence of PCNA. This stimulation may be due predominantly to an increase of initiation frequency and also to increased processivity. Directly interacts with POLDIP2 and POLDIP3. Directly interacts with KCTD13/PDIP1; in the presence of PCNA, this interaction may stimulate DNA polymerase activity. Component of the tetrameric Pol-zeta complex (Pol-zeta4), which consists of REV3L, MAD2L2, POLD2 and POLD3, with REV3L bearing DNA polymerase catalytic activity. Interacts with KCTD10.

The protein localises to the nucleus. Its function is as follows. Accessory component of both the DNA polymerase delta complex and the DNA polymerase zeta complex. As a component of the trimeric and tetrameric DNA polymerase delta complexes (Pol-delta3 and Pol-delta4, respectively), plays a role in high fidelity genome replication, including in lagging strand synthesis, and repair. Pol-delta3 and Pol-delta4 are characterized by the absence or the presence of POLD4. They exhibit differences in catalytic activity. Most notably, Pol-delta3 shows higher proofreading activity than Pol-delta4. Although both Pol-delta3 and Pol-delta4 process Okazaki fragments in vitro, Pol-delta3 may also be better suited to fulfill this task, exhibiting near-absence of strand displacement activity compared to Pol-delta4 and stalling on encounter with the 5'-blocking oligonucleotides. Pol-delta3 idling process may avoid the formation of a gap, while maintaining a nick that can be readily ligated. Along with DNA polymerase kappa, DNA polymerase delta carries out approximately half of nucleotide excision repair (NER) synthesis following UV irradiation. Under conditions of DNA replication stress, required for the repair of broken replication forks through break-induced replication (BIR). Involved in the translesion synthesis (TLS) of templates carrying O6-methylguanine or abasic sites performed by Pol-delta4, independently of DNA polymerase zeta (REV3L) or eta (POLH). Facilitates abasic site bypass by DNA polymerase delta by promoting extension from the nucleotide inserted opposite the lesion. Also involved in TLS as a component of the DNA polymerase zeta complex. Along with POLD3, dramatically increases the efficiency and processivity of DNA synthesis of the DNA polymerase zeta complex compared to the minimal zeta complex, consisting of only REV3L and REV7. In Mus musculus (Mouse), this protein is DNA polymerase delta subunit 2 (Pold2).